The chain runs to 343 residues: Methylthioribose-1-phosphate isomerase (343 aa).

Residues R44–A46, R85, and Q192 contribute to the substrate site. D233 acts as the Proton donor in catalysis. N243–K244 contacts substrate.

This sequence belongs to the eIF-2B alpha/beta/delta subunits family. MtnA subfamily.

The catalysed reaction is 5-(methylsulfanyl)-alpha-D-ribose 1-phosphate = 5-(methylsulfanyl)-D-ribulose 1-phosphate. It participates in amino-acid biosynthesis; L-methionine biosynthesis via salvage pathway; L-methionine from S-methyl-5-thio-alpha-D-ribose 1-phosphate: step 1/6. Catalyzes the interconversion of methylthioribose-1-phosphate (MTR-1-P) into methylthioribulose-1-phosphate (MTRu-1-P). In Carboxydothermus hydrogenoformans (strain ATCC BAA-161 / DSM 6008 / Z-2901), this protein is Methylthioribose-1-phosphate isomerase.